The sequence spans 202 residues: Holliday junction branch migration complex subunit RuvA (202 aa).

The tract at residues methionine 1–leucine 64 is domain I. Residues threonine 65–glycine 143 form a domain II region. The tract at residues glycine 143–alanine 147 is flexible linker. Residues alanine 148–glycine 202 are domain III.

This sequence belongs to the RuvA family. Homotetramer. Forms an RuvA(8)-RuvB(12)-Holliday junction (HJ) complex. HJ DNA is sandwiched between 2 RuvA tetramers; dsDNA enters through RuvA and exits via RuvB. An RuvB hexamer assembles on each DNA strand where it exits the tetramer. Each RuvB hexamer is contacted by two RuvA subunits (via domain III) on 2 adjacent RuvB subunits; this complex drives branch migration. In the full resolvosome a probable DNA-RuvA(4)-RuvB(12)-RuvC(2) complex forms which resolves the HJ.

Its subcellular location is the cytoplasm. Its function is as follows. The RuvA-RuvB-RuvC complex processes Holliday junction (HJ) DNA during genetic recombination and DNA repair, while the RuvA-RuvB complex plays an important role in the rescue of blocked DNA replication forks via replication fork reversal (RFR). RuvA specifically binds to HJ cruciform DNA, conferring on it an open structure. The RuvB hexamer acts as an ATP-dependent pump, pulling dsDNA into and through the RuvAB complex. HJ branch migration allows RuvC to scan DNA until it finds its consensus sequence, where it cleaves and resolves the cruciform DNA. The polypeptide is Holliday junction branch migration complex subunit RuvA (Myxococcus xanthus (strain DK1622)).